A 327-amino-acid polypeptide reads, in one-letter code: Regulatory protein MsrR (327 aa).

The segment covering 1 to 18 (MDKETNDNEYRRQSEHRT) has biased composition (basic and acidic residues). The interval 1–24 (MDKETNDNEYRRQSEHRTSAPKRK) is disordered. Residues 1-31 (MDKETNDNEYRRQSEHRTSAPKRKKKKKIRK) are Cytoplasmic-facing. The chain crosses the membrane as a helical; Signal-anchor for type II membrane protein span at residues 32-52 (LPIILLIVVILLIALVVYIVH). The Extracellular segment spans residues 53 to 327 (SYNSGVEYAK…QAIKDFLDED (275 aa)).

Belongs to the LytR/CpsA/Psr (LCP) family.

The protein localises to the cell membrane. In terms of biological role, involved in SarA attenuation. Affects resistance to oxacillin and teicoplanin, as well as the synthesis of virulence factors. The polypeptide is Regulatory protein MsrR (msrR) (Staphylococcus aureus (strain Mu50 / ATCC 700699)).